Reading from the N-terminus, the 240-residue chain is Ubiquinone biosynthesis O-methyltransferase (240 aa).

Arg44, Gly64, Asp85, and Met129 together coordinate S-adenosyl-L-methionine.

It belongs to the methyltransferase superfamily. UbiG/COQ3 family.

The enzyme catalyses a 3-demethylubiquinol + S-adenosyl-L-methionine = a ubiquinol + S-adenosyl-L-homocysteine + H(+). It carries out the reaction a 3-(all-trans-polyprenyl)benzene-1,2-diol + S-adenosyl-L-methionine = a 2-methoxy-6-(all-trans-polyprenyl)phenol + S-adenosyl-L-homocysteine + H(+). The protein operates within cofactor biosynthesis; ubiquinone biosynthesis. Functionally, O-methyltransferase that catalyzes the 2 O-methylation steps in the ubiquinone biosynthetic pathway. The sequence is that of Ubiquinone biosynthesis O-methyltransferase from Photorhabdus laumondii subsp. laumondii (strain DSM 15139 / CIP 105565 / TT01) (Photorhabdus luminescens subsp. laumondii).